We begin with the raw amino-acid sequence, 394 residues long: Guanine nucleotide-binding protein G(s) subunit alpha (394 aa).

Positions 1–23 (MGCLGNSKTEDQRNEEKAQREAN) are disordered. Residue G2 is the site of N-palmitoyl glycine attachment. The S-palmitoyl cysteine moiety is linked to residue C3. The segment covering 8-23 (KTEDQRNEEKAQREAN) has biased composition (basic and acidic residues). The G-alpha domain occupies 39–394 (ATHRLLLLGA…RMHLRQYELL (356 aa)). A G1 motif region spans residues 42–55 (RLLLLGAGESGKST). Position 47-55 (47-55 (GAGESGKST)) interacts with GTP. S54 is a Mg(2+) binding site. A disordered region spans residues 68–90 (FNGEGGEEDPQAARSNSDGEKAT). The segment at 196–204 (DLLRCRVLT) is G2 motif. Residues 197–204 (LLRCRVLT), 223–227 (DVGGQ), 292–295 (NKQD), and A366 each bind GTP. T204 serves as a coordination point for Mg(2+). Positions 219-228 (FHMFDVGGQR) are G3 motif. The interval 288–295 (ILFLNKQD) is G4 motif. Residues 364–369 (TCAVDT) form a G5 motif region.

This sequence belongs to the G-alpha family. G(s) subfamily. In terms of assembly, heterotrimeric G proteins are composed of 3 units; alpha, beta and gamma. The alpha chain contains the guanine nucleotide binding site. Interacts with CRY1; the interaction may block GPCR-mediated regulation of cAMP concentrations. Interacts with ADCY6 and stimulates its adenylyl cyclase activity. Interacts with ADCY2 and ADCY5. Stimulates the ADCY5 adenylyl cyclase activity. Interaction with SASH1.

It localises to the cell membrane. Guanine nucleotide-binding proteins (G proteins) function as transducers in numerous signaling pathways controlled by G protein-coupled receptors (GPCRs). Signaling involves the activation of adenylyl cyclases, resulting in increased levels of the signaling molecule cAMP. GNAS functions downstream of several GPCRs, including beta-adrenergic receptors. Stimulates the Ras signaling pathway via RAPGEF2. The protein is Guanine nucleotide-binding protein G(s) subunit alpha (GNAS) of Cricetulus griseus (Chinese hamster).